The following is a 341-amino-acid chain: Anthranilate phosphoribosyltransferase (341 aa).

5-phospho-alpha-D-ribose 1-diphosphate contacts are provided by residues G79, 82 to 83 (GD), T87, 89 to 92 (NIST), 107 to 115 (KHGNRAASS), and S119. Anthranilate is bound at residue G79. S91 is a Mg(2+) binding site. Residue N110 participates in anthranilate binding. R165 is a binding site for anthranilate. The Mg(2+) site is built by D224 and E225.

It belongs to the anthranilate phosphoribosyltransferase family. Homodimer. The cofactor is Mg(2+).

The enzyme catalyses N-(5-phospho-beta-D-ribosyl)anthranilate + diphosphate = 5-phospho-alpha-D-ribose 1-diphosphate + anthranilate. It functions in the pathway amino-acid biosynthesis; L-tryptophan biosynthesis; L-tryptophan from chorismate: step 2/5. Functionally, catalyzes the transfer of the phosphoribosyl group of 5-phosphorylribose-1-pyrophosphate (PRPP) to anthranilate to yield N-(5'-phosphoribosyl)-anthranilate (PRA). The sequence is that of Anthranilate phosphoribosyltransferase from Dehalococcoides mccartyi (strain ATCC BAA-2266 / KCTC 15142 / 195) (Dehalococcoides ethenogenes (strain 195)).